The sequence spans 226 residues: tRNA (guanine-N(7)-)-methyltransferase (226 aa).

The interval 1–22 is disordered; it reads MTTPQQPHGPLRSFGRLKSRPV. Residues Glu-59, Glu-84, Asp-111, and Asp-133 each coordinate S-adenosyl-L-methionine. Asp-133 is a catalytic residue. Lys-137 provides a ligand contact to substrate. The segment at 139-144 is interaction with RNA; it reads RHNKRR. Residues Asp-169 and 206 to 209 contribute to the substrate site; that span reads TRYE.

This sequence belongs to the class I-like SAM-binding methyltransferase superfamily. TrmB family.

It carries out the reaction guanosine(46) in tRNA + S-adenosyl-L-methionine = N(7)-methylguanosine(46) in tRNA + S-adenosyl-L-homocysteine. The protein operates within tRNA modification; N(7)-methylguanine-tRNA biosynthesis. In terms of biological role, catalyzes the formation of N(7)-methylguanine at position 46 (m7G46) in tRNA. The chain is tRNA (guanine-N(7)-)-methyltransferase from Caulobacter vibrioides (strain ATCC 19089 / CIP 103742 / CB 15) (Caulobacter crescentus).